The primary structure comprises 264 residues: Synaptophysin-like protein 2 (264 aa).

Residues 1–33 (MSSTESPGRTSDKSPRQQVDRLLLGLRWQRLEE) lie on the Cytoplasmic side of the membrane. One can recognise an MARVEL domain in the interval 30–238 (RLEEPLGFIK…NCWFVFKETP (209 aa)). A helical transmembrane segment spans residues 34–54 (PLGFIKVLQWLFAIFAFGSCG). Over 55–116 (SYSGETGALV…LMGDFSAPAE (62 aa)) the chain is Vesicular. The helical transmembrane segment at 117–137 (FFVTLGIFSFFYTMAALVIYL) threads the bilayer. The Cytoplasmic segment spans residues 138 to 150 (RFHKLYTENKRFP). Residues 151 to 171 (LVDFCVTVSFTFFWLVAAAAW) traverse the membrane as a helical segment. Residues 172 to 213 (GKGLTDVKGATRPSSLTAAMSVCHGEEAVCSAGATPSMGLAN) are Vesicular-facing. Asn-213 carries N-linked (GlcNAc...) asparagine glycosylation. A helical membrane pass occupies residues 214 to 234 (LSVLFGFINFFLWAGNCWFVF). Over 235–264 (KETPWHGQGQDQGQGPSQESAAEQGAVEKQ) the chain is Cytoplasmic. A disordered region spans residues 242-264 (QGQDQGQGPSQESAAEQGAVEKQ).

The protein belongs to the synaptophysin/synaptobrevin family. As to expression, expressed abundantly in skeletal muscle and at lower levels in the kidney.

It is found in the membrane. Involved in communication between the T-tubular and junctional sarcoplasmic reticulum (SR) membranes. The protein is Synaptophysin-like protein 2 (Sypl2) of Mus musculus (Mouse).